Here is a 66-residue protein sequence, read N- to C-terminus: Large ribosomal subunit protein uL29 (66 aa).

It belongs to the universal ribosomal protein uL29 family.

This chain is Large ribosomal subunit protein uL29, found in Rhizobium leguminosarum bv. trifolii (strain WSM2304).